The chain runs to 161 residues: Lincosamide resistance protein (161 aa).

This Staphylococcus haemolyticus protein is Lincosamide resistance protein (linA).